Reading from the N-terminus, the 332-residue chain is Sesquiterpene synthase MBR_10393 (332 aa).

2 residues coordinate Mg(2+): Asp91 and Asp96. The short motif at 91-96 is the DDXXXD motif element; that stretch reads DDLFVD. A substrate-binding site is contributed by Arg184. Positions 230, 234, and 238 each coordinate Mg(2+).

It belongs to the terpene synthase family. It depends on Mg(2+) as a cofactor.

The enzyme catalyses (2E,6E)-farnesyl diphosphate + H2O = (+)-corvol ether B + diphosphate. It carries out the reaction (2E,6E)-farnesyl diphosphate + H2O = (+)-corvol ether A + diphosphate. Functionally, terpene synthase that catalyzes the conversion of (2E,6E)-farnesyl diphosphate (FPP) into sesquiterpenes which are important for fungi-environment interactions. Produces a mixture consisting of 8 sesquiterpenes including corvol ethers A and B, as well as traces of epizonarene, gamma-cadinene, delta-cadinene, alpha-cadinene, alpha-cadinol, and an unidentified sesquiterpene. The major product is corvol ether B. The chain is Sesquiterpene synthase MBR_10393 from Metarhizium brunneum (strain ARSEF 3297).